A 366-amino-acid polypeptide reads, in one-letter code: Geranylgeranyl pyrophosphate synthase, chloroplastic/chromoplastic (366 aa).

A disordered region spans residues 44 to 65; it reads KRTVSSSSSSSLITKEDNNLKS. The isopentenyl diphosphate site is built by Lys112, Arg115, and His144. 2 residues coordinate Mg(2+): Asp151 and Asp157. Arg162 serves as a coordination point for dimethylallyl diphosphate. Arg163 serves as a coordination point for isopentenyl diphosphate. Positions 251, 252, 289, 306, and 316 each coordinate dimethylallyl diphosphate.

It belongs to the FPP/GGPP synthase family. As to quaternary structure, dimer. It depends on Mg(2+) as a cofactor.

The protein resides in the plastid. Its subcellular location is the chloroplast stroma. It localises to the chromoplast. It catalyses the reaction isopentenyl diphosphate + dimethylallyl diphosphate = (2E)-geranyl diphosphate + diphosphate. The catalysed reaction is isopentenyl diphosphate + (2E)-geranyl diphosphate = (2E,6E)-farnesyl diphosphate + diphosphate. The enzyme catalyses isopentenyl diphosphate + (2E,6E)-farnesyl diphosphate = (2E,6E,10E)-geranylgeranyl diphosphate + diphosphate. It functions in the pathway isoprenoid biosynthesis; farnesyl diphosphate biosynthesis; farnesyl diphosphate from geranyl diphosphate and isopentenyl diphosphate: step 1/1. Its pathway is isoprenoid biosynthesis; geranyl diphosphate biosynthesis; geranyl diphosphate from dimethylallyl diphosphate and isopentenyl diphosphate: step 1/1. The protein operates within isoprenoid biosynthesis; geranylgeranyl diphosphate biosynthesis; geranylgeranyl diphosphate from farnesyl diphosphate and isopentenyl diphosphate: step 1/1. Catalyzes the trans-addition of the three molecules of IPP onto DMAPP to form geranylgeranyl pyrophosphate. The chain is Geranylgeranyl pyrophosphate synthase, chloroplastic/chromoplastic (GGPS1) from Sinapis alba (White mustard).